Reading from the N-terminus, the 235-residue chain is Enolase-phosphatase E1 (235 aa).

Belongs to the HAD-like hydrolase superfamily. MasA/MtnC family. In terms of assembly, monomer. It depends on Mg(2+) as a cofactor.

It carries out the reaction 5-methylsulfanyl-2,3-dioxopentyl phosphate + H2O = 1,2-dihydroxy-5-(methylsulfanyl)pent-1-en-3-one + phosphate. Its pathway is amino-acid biosynthesis; L-methionine biosynthesis via salvage pathway; L-methionine from S-methyl-5-thio-alpha-D-ribose 1-phosphate: step 3/6. It functions in the pathway amino-acid biosynthesis; L-methionine biosynthesis via salvage pathway; L-methionine from S-methyl-5-thio-alpha-D-ribose 1-phosphate: step 4/6. Functionally, bifunctional enzyme that catalyzes the enolization of 2,3-diketo-5-methylthiopentyl-1-phosphate (DK-MTP-1-P) into the intermediate 2-hydroxy-3-keto-5-methylthiopentenyl-1-phosphate (HK-MTPenyl-1-P), which is then dephosphorylated to form the acireductone 1,2-dihydroxy-3-keto-5-methylthiopentene (DHK-MTPene). This is Enolase-phosphatase E1 from Parvibaculum lavamentivorans (strain DS-1 / DSM 13023 / NCIMB 13966).